The primary structure comprises 432 residues: D-amino acid dehydrogenase (432 aa).

3 to 17 (VVILGSGVVGVTSAW) contributes to the FAD binding site.

The protein belongs to the DadA oxidoreductase family. The cofactor is FAD.

The enzyme catalyses a D-alpha-amino acid + A + H2O = a 2-oxocarboxylate + AH2 + NH4(+). It functions in the pathway amino-acid degradation; D-alanine degradation; NH(3) and pyruvate from D-alanine: step 1/1. In terms of biological role, oxidative deamination of D-amino acids. The sequence is that of D-amino acid dehydrogenase from Salmonella agona (strain SL483).